Consider the following 302-residue polypeptide: Deoxyhypusine hydroxylase (302 aa).

HEAT-like PBS-type repeat units lie at residues 23-49 (ERFR…AFDD), 54-80 (LKHE…VLKD), 87-113 (VRHE…YKQD), 175-201 (DRYR…GLKD), 206-232 (FRHE…NLED), and 239-265 (VRHE…YAED). 4 residues coordinate Fe cation: histidine 56, glutamate 57, histidine 89, and glutamate 90. Positions 208, 209, 241, and 242 each coordinate Fe cation.

This sequence belongs to the deoxyhypusine hydroxylase family. Fe(2+) serves as cofactor.

Its subcellular location is the endoplasmic reticulum membrane. It catalyses the reaction [eIF5A protein]-deoxyhypusine + AH2 + O2 = [eIF5A protein]-hypusine + A + H2O. It functions in the pathway protein modification; eIF5A hypusination. Functionally, catalyzes the hydroxylation of the N(6)-(4-aminobutyl)-L-lysine intermediate to form hypusine, an essential post-translational modification only found in mature eIF-5A factor. Essential for organismal viability and plays a role in a wide number of important processes such as cell growth and proliferation, and regulates induction of autophagy and protein synthesis. Has a role in eIF-5A-mediated translational control. In Drosophila melanogaster (Fruit fly), this protein is Deoxyhypusine hydroxylase.